The following is a 619-amino-acid chain: Dihydroxy-acid dehydratase (619 aa).

Asp81 is a Mg(2+) binding site. Cys122 is a [2Fe-2S] cluster binding site. Mg(2+)-binding residues include Asp123 and Lys124. An N6-carboxylysine modification is found at Lys124. Cys195 is a [2Fe-2S] cluster binding site. Glu494 lines the Mg(2+) pocket. The Proton acceptor role is filled by Ser520.

Belongs to the IlvD/Edd family. Homodimer. Requires [2Fe-2S] cluster as cofactor. It depends on Mg(2+) as a cofactor.

It carries out the reaction (2R)-2,3-dihydroxy-3-methylbutanoate = 3-methyl-2-oxobutanoate + H2O. The catalysed reaction is (2R,3R)-2,3-dihydroxy-3-methylpentanoate = (S)-3-methyl-2-oxopentanoate + H2O. Its pathway is amino-acid biosynthesis; L-isoleucine biosynthesis; L-isoleucine from 2-oxobutanoate: step 3/4. It functions in the pathway amino-acid biosynthesis; L-valine biosynthesis; L-valine from pyruvate: step 3/4. Functions in the biosynthesis of branched-chain amino acids. Catalyzes the dehydration of (2R,3R)-2,3-dihydroxy-3-methylpentanoate (2,3-dihydroxy-3-methylvalerate) into 2-oxo-3-methylpentanoate (2-oxo-3-methylvalerate) and of (2R)-2,3-dihydroxy-3-methylbutanoate (2,3-dihydroxyisovalerate) into 2-oxo-3-methylbutanoate (2-oxoisovalerate), the penultimate precursor to L-isoleucine and L-valine, respectively. The protein is Dihydroxy-acid dehydratase of Shewanella denitrificans (strain OS217 / ATCC BAA-1090 / DSM 15013).